The chain runs to 321 residues: uncharacterized protein (321 aa).

A disordered region spans residues 280–306; that stretch reads NSDHINNENNTNSNNDDNSNNSNNNNE. Over residues 286–306 the composition is skewed to low complexity; the sequence is NENNTNSNNDDNSNNSNNNNE.

This is an uncharacterized protein from Dictyostelium discoideum (Social amoeba).